The chain runs to 299 residues: tRNA dimethylallyltransferase (299 aa).

Position 10–17 (10–17 (GPTAVGKT)) interacts with ATP. Residue 12–17 (TAVGKT) participates in substrate binding. Residues 35 to 38 (DSQQ) form an interaction with substrate tRNA region.

Belongs to the IPP transferase family. In terms of assembly, monomer. Requires Mg(2+) as cofactor.

It carries out the reaction adenosine(37) in tRNA + dimethylallyl diphosphate = N(6)-dimethylallyladenosine(37) in tRNA + diphosphate. Catalyzes the transfer of a dimethylallyl group onto the adenine at position 37 in tRNAs that read codons beginning with uridine, leading to the formation of N6-(dimethylallyl)adenosine (i(6)A). This is tRNA dimethylallyltransferase from Streptococcus thermophilus (strain ATCC BAA-491 / LMD-9).